The following is a 687-amino-acid chain: Glycine--tRNA ligase beta subunit (687 aa).

It belongs to the class-II aminoacyl-tRNA synthetase family. Tetramer of two alpha and two beta subunits.

The protein resides in the cytoplasm. It carries out the reaction tRNA(Gly) + glycine + ATP = glycyl-tRNA(Gly) + AMP + diphosphate. The polypeptide is Glycine--tRNA ligase beta subunit (Neisseria meningitidis serogroup C (strain 053442)).